The sequence spans 311 residues: MTELTNADLLTAIVTPFTDEGTIDYPALDQLTEHLLQAGNNGFVVGGTTGETPTLSHDEKIELYTHFGRLIAGRVPVIAGTGSNNTAETIAFTNEVAQIEGIDYALVVVPPYNKPNQRGMLAHFTAVADAVELPLIIYNIPGRTGVKMETSTVLTLAEHPNIAGIKQCASLEEFQTLVENRPAGFAVYTGEDAQALTTKVLGGDGVISVAAHNYAPQMRAMYDALSAGNYQVAAKLQRWLTPRMAALFMFPSPSPVKAVLAAQGLATDHCRLPICDLTAEEKEQLATALGLPSDALAGQLPTDLGEGLTND.

Thr49 contributes to the pyruvate binding site. Tyr138 acts as the Proton donor/acceptor in catalysis. Catalysis depends on Lys166, which acts as the Schiff-base intermediate with substrate. Position 207 (Ile207) interacts with pyruvate.

The protein belongs to the DapA family. Homotetramer; dimer of dimers.

It localises to the cytoplasm. The enzyme catalyses L-aspartate 4-semialdehyde + pyruvate = (2S,4S)-4-hydroxy-2,3,4,5-tetrahydrodipicolinate + H2O + H(+). Its pathway is amino-acid biosynthesis; L-lysine biosynthesis via DAP pathway; (S)-tetrahydrodipicolinate from L-aspartate: step 3/4. Functionally, catalyzes the condensation of (S)-aspartate-beta-semialdehyde [(S)-ASA] and pyruvate to 4-hydroxy-tetrahydrodipicolinate (HTPA). In Limosilactobacillus fermentum (strain NBRC 3956 / LMG 18251) (Lactobacillus fermentum), this protein is 4-hydroxy-tetrahydrodipicolinate synthase.